We begin with the raw amino-acid sequence, 359 residues long: Cyclic AMP response element-binding protein B (359 aa).

Disordered regions lie at residues 1 to 73 (MDNS…AQGG) and 185 to 238 (VRNK…FTEI). Residues 9-32 (NGNSSAASGSNDVVDVVAQQAAAA) are compositionally biased toward low complexity. The span at 33–47 (VGGGGGGGGGGGGGN) shows a compositional bias: gly residues. The segment covering 48-70 (PQQQQQNPQSTTAGGPTGATNNA) has biased composition (low complexity). The 60-residue stretch at 198-257 (KPEPNTQHPEDSDESLSDDDSQHHRSELTRRPSYNKIFTEISGPDMSGASLPMSDGVLNS) folds into the KID domain. Phosphoserine occurs at positions 209, 212, and 214. Positions 217–227 (DSQHHRSELTR) are enriched in basic and acidic residues. One can recognise a bZIP domain in the interval 300–359 (TRKREIRLQKNREAARECRRKKKEYIKCLENRVAVLENQNKALIEELKSLKELYCQTKND). The basic motif stretch occupies residues 301–326 (RKREIRLQKNREAARECRRKKKEYIK). A leucine-zipper region spans residues 328 to 349 (LENRVAVLENQNKALIEELKSL).

It belongs to the bZIP family. ATF subfamily. Homodimer. In terms of tissue distribution, most cells of the adult brain; cell bodies, but not neuropil.

It is found in the nucleus. Isoform E is a PKA-dependent transcriptional activator. Isoform J is a direct antagonist of activation by isoform E in cell culture. Binds the cAMP response element (CRE) (consensus: 5'-GTGACGT[AC][AG]-3'), a sequence present in many viral and cellular promoters. Has a role in long-term memory. This is Cyclic AMP response element-binding protein B from Drosophila melanogaster (Fruit fly).